A 108-amino-acid polypeptide reads, in one-letter code: UPF0060 membrane protein RER_49640 (108 aa).

The next 4 helical transmembrane spans lie at 8–28 (LLFV…WQGI), 33–53 (GWIW…VATM), 62–82 (ILAA…VVMD), and 87–107 (DRFD…IMYA).

Belongs to the UPF0060 family.

The protein localises to the cell membrane. The protein is UPF0060 membrane protein RER_49640 of Rhodococcus erythropolis (strain PR4 / NBRC 100887).